Reading from the N-terminus, the 306-residue chain is Tyrosine recombinase XerC (306 aa).

The 90-residue stretch at 1–90 folds into the Core-binding (CB) domain; it reads MYVHIDNFLV…AWRSFYRYLY (90 aa). The region spanning 111–298 is the Tyr recombinase domain; sequence RLPRFLYEDE…TGERLKKVYR (188 aa). Active-site residues include Arg151, Lys175, His250, Arg253, and His276. The active-site O-(3'-phospho-DNA)-tyrosine intermediate is the Tyr285.

It belongs to the 'phage' integrase family. XerC subfamily. In terms of assembly, forms a cyclic heterotetrameric complex composed of two molecules of XerC and two molecules of XerD.

Its subcellular location is the cytoplasm. Its function is as follows. Site-specific tyrosine recombinase, which acts by catalyzing the cutting and rejoining of the recombining DNA molecules. The XerC-XerD complex is essential to convert dimers of the bacterial chromosome into monomers to permit their segregation at cell division. It also contributes to the segregational stability of plasmids. This Pelotomaculum thermopropionicum (strain DSM 13744 / JCM 10971 / SI) protein is Tyrosine recombinase XerC.